A 187-amino-acid polypeptide reads, in one-letter code: uncharacterized protein (187 aa).

The Nudix hydrolase domain occupies 26 to 157; it reads NRHAAVLLPI…YLDVSRRGQQ (132 aa). The short motif at 64–86 is the Nudix box element; the sequence is GVADPKDKSIIATALREAEEEVN. 2 residues coordinate Mg(2+): Glu-80 and Glu-84.

This sequence belongs to the Nudix hydrolase family. PCD1 subfamily. It depends on Mn(2+) as a cofactor. Requires Mg(2+) as cofactor.

Its function is as follows. Probably mediates the hydrolysis of some nucleoside diphosphate derivatives. This is an uncharacterized protein from Photorhabdus laumondii subsp. laumondii (strain DSM 15139 / CIP 105565 / TT01) (Photorhabdus luminescens subsp. laumondii).